Consider the following 512-residue polypeptide: Protein SHC1 (512 aa).

Acidic residues predominate over residues 101-113 (EQDEFENDVEDDA). Disordered stretches follow at residues 101-122 (EQDE…EKSQ) and 144-164 (DGNS…ESVA). Sel1-like repeat units follow at residues 318-353 (PDAQ…KRMH), 354-389 (IESV…TKNH), 390-429 (PAAM…SMAS), and 433-470 (CGAP…ALGH).

It belongs to the SKT5 family.

It is found in the cytoplasm. The protein localises to the cytoplasmic granule membrane. Functionally, required for the activation of chitin synthase III (CHS3) activity during the sporulation process. The chain is Protein SHC1 (SHC1) from Saccharomyces cerevisiae (strain ATCC 204508 / S288c) (Baker's yeast).